Here is a 253-residue protein sequence, read N- to C-terminus: Sulfate transporter CysZ (253 aa).

4 helical membrane passes run 31–51, 75–95, 151–171, and 222–242; these read FVIL…WWLF, LLWP…FSTI, IVLL…PVLW, and IPVL…AMWV.

It belongs to the CysZ family.

It is found in the cell inner membrane. In terms of biological role, high affinity, high specificity proton-dependent sulfate transporter, which mediates sulfate uptake. Provides the sulfur source for the cysteine synthesis pathway. The polypeptide is Sulfate transporter CysZ (Citrobacter koseri (strain ATCC BAA-895 / CDC 4225-83 / SGSC4696)).